The sequence spans 417 residues: Hyaluronidase-3 (417 aa).

Residues 1-20 (MTTQLGPALVLGVALCLGCG) form the signal peptide. 5 disulfide bridges follow: Cys-42–Cys-331, Cys-205–Cys-220, Cys-356–Cys-367, Cys-361–Cys-395, and Cys-397–Cys-406. Residue Asn-69 is glycosylated (N-linked (GlcNAc...) asparagine). Glu-129 acts as the Proton donor in catalysis. Residue Asn-215 is glycosylated (N-linked (GlcNAc...) asparagine). One can recognise an EGF-like domain in the interval 352–407 (AAMACSHQRCHGHGRCARRDPGQMEAFLHLWPDGSLGDWKSFSCHCYWGWAGPTCQ).

This sequence belongs to the glycosyl hydrolase 56 family. N-glycosylated. Expressed in sperm. Highly expressed in epidermis of the skin, where it is expressed intracellularily in the deep horny layer (at protein level). Bone marrow, testis and kidney.

The protein localises to the secreted. Its subcellular location is the cell membrane. It is found in the cytoplasmic vesicle. It localises to the secretory vesicle. The protein resides in the acrosome. The protein localises to the endoplasmic reticulum. Its subcellular location is the early endosome. The catalysed reaction is Random hydrolysis of (1-&gt;4)-linkages between N-acetyl-beta-D-glucosamine and D-glucuronate residues in hyaluronate.. Facilitates sperm penetration into the layer of cumulus cells surrounding the egg by digesting hyaluronic acid. Involved in induction of the acrosome reaction in the sperm. Involved in follicular atresia, the breakdown of immature ovarian follicles that are not selected to ovulate. Induces ovarian granulosa cell apoptosis, possibly via apoptotic signaling pathway involving CASP8 and CASP3 activation, and poly(ADP-ribose) polymerase (PARP) cleavage. Has no hyaluronidase activity in embryonic fibroblasts in vitro. Has no hyaluronidase activity in granulosa cells in vitro. The polypeptide is Hyaluronidase-3 (HYAL3) (Homo sapiens (Human)).